A 387-amino-acid polypeptide reads, in one-letter code: WD repeat-containing protein 89 (387 aa).

WD repeat units follow at residues 21–65 (KEPT…VLRE), 68–107 (GYPG…EKPV), 112–156 (GYPS…QDLS), 168–208 (THSD…EEDA), 214–254 (NSIS…TDEP), and 319–358 (GHAA…KTFT).

The sequence is that of WD repeat-containing protein 89 (WDR89) from Pongo abelii (Sumatran orangutan).